Reading from the N-terminus, the 347-residue chain is D-alanine--D-alanine ligase (347 aa).

Residues 131-333 enclose the ATP-grasp domain; that stretch reads KRVLESAGIA…YPELIERLVD (203 aa). ATP is bound at residue 161-216; it reads EEKLAYPVFTKPSNMGSSVGISKSENQEELRQALELAFRYDSRVLVEQGVNAREIE. Residues aspartate 287, glutamate 300, and asparagine 302 each coordinate Mg(2+).

It belongs to the D-alanine--D-alanine ligase family. Mg(2+) serves as cofactor. Requires Mn(2+) as cofactor.

It is found in the cytoplasm. It catalyses the reaction 2 D-alanine + ATP = D-alanyl-D-alanine + ADP + phosphate + H(+). The protein operates within cell wall biogenesis; peptidoglycan biosynthesis. Functionally, cell wall formation. In Streptococcus pneumoniae (strain CGSP14), this protein is D-alanine--D-alanine ligase.